We begin with the raw amino-acid sequence, 332 residues long: Eukaryotic translation initiation factor 3 subunit I (332 aa).

WD repeat units follow at residues 8–47 (GHER…GTYH), 48–87 (GHQG…LLHT), 144–182 (DESK…LLSS), and 279–318 (GHFG…FDFM).

Belongs to the eIF-3 subunit I family. In terms of assembly, component of the eukaryotic translation initiation factor 3 (eIF-3) complex.

It is found in the cytoplasm. Functionally, component of the eukaryotic translation initiation factor 3 (eIF-3) complex, which is involved in protein synthesis of a specialized repertoire of mRNAs and, together with other initiation factors, stimulates binding of mRNA and methionyl-tRNAi to the 40S ribosome. The eIF-3 complex specifically targets and initiates translation of a subset of mRNAs involved in cell proliferation. The chain is Eukaryotic translation initiation factor 3 subunit I from Phaeosphaeria nodorum (strain SN15 / ATCC MYA-4574 / FGSC 10173) (Glume blotch fungus).